The following is a 188-amino-acid chain: Ribosome-recycling factor (188 aa).

It belongs to the RRF family.

It localises to the cytoplasm. Responsible for the release of ribosomes from messenger RNA at the termination of protein biosynthesis. May increase the efficiency of translation by recycling ribosomes from one round of translation to another. In Bradyrhizobium diazoefficiens (strain JCM 10833 / BCRC 13528 / IAM 13628 / NBRC 14792 / USDA 110), this protein is Ribosome-recycling factor.